The primary structure comprises 406 residues: Lysosome-associated membrane glycoprotein 1 (406 aa).

An N-terminal signal peptide occupies residues 1–24; sequence MAAPGARRPLLLLLLAGLAHGASA. The first lumenal domain stretch occupies residues 25–188; sequence LFEVKNNGTT…SKEETHCTQD (164 aa). Residues 25–370 are Lumenal-facing; the sequence is LFEVKNNGTT…VEECVQDGNN (346 aa). 10 N-linked (GlcNAc...) asparagine glycosylation sites follow: Asn31, Asn52, Asn58, Asn70, Asn78, Asn97, Asn101, Asn115, Asn159, and Asn177. Cys35 and Cys74 are oxidised to a cystine. A disulfide bridge connects residues Cys149 and Cys185. The segment at 180–207 is disordered; that stretch reads KEETHCTQDGPSPTTGPPSPSPPLVPTN. A hinge region spans residues 189 to 218; it reads GPSPTTGPPSPSPPLVPTNPTVSKYNVTGN. The segment covering 193 to 205 has biased composition (pro residues); the sequence is TTGPPSPSPPLVP. Residues Asn214, Asn219, Asn232, and Asn240 are each glycosylated (N-linked (GlcNAc...) asparagine). Residues 219 to 370 form a second lumenal domain region; sequence NGTCLLASMA…VEECVQDGNN (152 aa). An intrachain disulfide couples Cys222 to Cys259. N-linked (GlcNAc...) (high mannose) asparagine glycosylation is present at Asn252. N-linked (GlcNAc...) asparagine glycans are attached at residues Asn282, Asn296, and Asn311. Cys327 and Cys364 are oxidised to a cystine. Residues 371 to 394 form a helical membrane-spanning segment; it reads MLIPIAVGGALAGLVLIVLIAYLI. Residues 395–406 are Cytoplasmic-facing; it reads GRKRSHAGYQTI.

The protein belongs to the LAMP family. Interacts with ABCB9; this interaction strongly stabilizes ABCB9 and protects ABCB9 against lysosomal degradation. Interacts with FURIN. Interacts with TMEM175; inhibiting the proton channel activity of TMEM175. Post-translationally, O- and N-glycosylated; some of the N-glycans attached to LAMP-1 are polylactosaminoglycans.

Its subcellular location is the lysosome membrane. The protein localises to the endosome membrane. It is found in the late endosome membrane. The protein resides in the cell membrane. It localises to the cytolytic granule membrane. Its function is as follows. Lysosomal membrane glycoprotein which plays an important role in lysosome biogenesis, lysosomal pH regulation, autophagy and cholesterol homeostasis. Acts as an important regulator of lysosomal lumen pH regulation by acting as a direct inhibitor of the proton channel TMEM175, facilitating lysosomal acidification for optimal hydrolase activity. Also plays an important role in NK-cells cytotoxicity. Mechanistically, participates in cytotoxic granule movement to the cell surface and perforin trafficking to the lytic granule. In addition, protects NK-cells from degranulation-associated damage induced by their own cytotoxic granule content. Presents carbohydrate ligands to selectins. Also implicated in tumor cell metastasis. This is Lysosome-associated membrane glycoprotein 1 (Lamp1) from Mus musculus (Mouse).